We begin with the raw amino-acid sequence, 70 residues long: Putative defensin-like protein 280 (70 aa).

The N-terminal stretch at 1–23 (MASIKHFFLVFICVSVLLTSGLA) is a signal peptide. 3 disulfides stabilise this stretch: Cys-30-Cys-53, Cys-39-Cys-65, and Cys-43-Cys-67.

Belongs to the DEFL family.

It localises to the secreted. The chain is Putative defensin-like protein 280 from Arabidopsis thaliana (Mouse-ear cress).